The following is a 157-amino-acid chain: 2-C-methyl-D-erythritol 2,4-cyclodiphosphate synthase (157 aa).

A divalent metal cation-binding residues include D9 and H11. 4-CDP-2-C-methyl-D-erythritol 2-phosphate-binding positions include 9 to 11 (DVH) and 35 to 36 (HS). H43 is an a divalent metal cation binding site. 4-CDP-2-C-methyl-D-erythritol 2-phosphate contacts are provided by residues 57 to 59 (DIG), 62 to 66 (FPDTD), 101 to 107 (AEKPKMA), 133 to 136 (TTTE), F140, and R143.

It belongs to the IspF family. As to quaternary structure, homotrimer. The cofactor is a divalent metal cation.

It carries out the reaction 4-CDP-2-C-methyl-D-erythritol 2-phosphate = 2-C-methyl-D-erythritol 2,4-cyclic diphosphate + CMP. The protein operates within isoprenoid biosynthesis; isopentenyl diphosphate biosynthesis via DXP pathway; isopentenyl diphosphate from 1-deoxy-D-xylulose 5-phosphate: step 4/6. Its function is as follows. Involved in the biosynthesis of isopentenyl diphosphate (IPP) and dimethylallyl diphosphate (DMAPP), two major building blocks of isoprenoid compounds. Catalyzes the conversion of 4-diphosphocytidyl-2-C-methyl-D-erythritol 2-phosphate (CDP-ME2P) to 2-C-methyl-D-erythritol 2,4-cyclodiphosphate (ME-CPP) with a corresponding release of cytidine 5-monophosphate (CMP). The chain is 2-C-methyl-D-erythritol 2,4-cyclodiphosphate synthase from Listeria innocua serovar 6a (strain ATCC BAA-680 / CLIP 11262).